A 731-amino-acid chain; its full sequence is Actin filament-associated protein 1 (731 aa).

N-acetylmethionine is present on Met1. The disordered stretch occupies residues Val46–Glu90. Pro residues predominate over residues Pro59–Pro84. The short motif at Pro70–Trp73 is the SH3-binding element. The SH2-binding 1 signature appears at Tyr93–Ala96. The tract at residues Gly118–His138 is disordered. The PH 1 domain maps to Asp152–Ser248. The disordered stretch occupies residues Gly252–Ser318. A compositionally biased stretch (basic and acidic residues) spans Ala271–Ser284. 2 positions are modified to phosphoserine: Ser283 and Ser284. The region spanning Asp348–Gly442 is the PH 2 domain. Residues Tyr452–Val457 carry the SH2-binding 2 motif. A disordered region spans residues Ser511–Asn550. Ser549 bears the Phosphoserine mark. A coiled-coil region spans residues Lys558 to Ala649. Positions Asp595–Thr638 are interaction with F-actin. The interval Ala657–Thr731 is disordered. Phosphoserine occurs at positions 665, 666, and 669. A Phosphothreonine modification is found at Thr676. Residues Glu678–Thr687 are compositionally biased toward polar residues. Residues Ser680 and Ser688 each carry the phosphoserine modification. The segment covering Lys721–Thr731 has biased composition (basic and acidic residues).

As to quaternary structure, monomer and homomultimer. Interacts via its C-terminus with F-actin; probably involving AFAP1 multimers. Interacts with activated SRC SH3-SH2 domains. Interacts via its PH 1 domain with PRKCA, PRKCB and PRKCI. In terms of processing, phosphorylated on tyrosine residues. As to expression, widely expressed with highest levels in brain.

The protein localises to the cytoplasm. The protein resides in the cytoskeleton. Its subcellular location is the stress fiber. Can cross-link actin filaments into both network and bundle structures. May modulate changes in actin filament integrity and induce lamellipodia formation. May function as an adapter molecule that links other proteins, such as SRC and PKC to the actin cytoskeleton. The protein is Actin filament-associated protein 1 (Afap1) of Rattus norvegicus (Rat).